Reading from the N-terminus, the 388-residue chain is Na(+)/H(+) antiporter NhaA (388 aa).

Topologically, residues 1–11 (MKHLHRFFSSD) are cytoplasmic. The chain crosses the membrane as a helical span at residues 12–31 (ASGGIILIIAAILAMIMANS). Residues 32–58 (GATSGWYHDFLETPVQLRVGSLEINKN) are Periplasmic-facing. A helical transmembrane segment spans residues 59–80 (MLLWINDALMAVFFLLVGLEVK). Residues 81–96 (RELMQGSLASLRQAAF) are Cytoplasmic-facing. A helical transmembrane segment spans residues 97-116 (PVIAAIGGMIVPALLYLAFN). At 117–122 (YADPIT) the chain is on the periplasmic side. A helical membrane pass occupies residues 123-130 (REGWAIPA). The Cytoplasmic segment spans residues 131–154 (ATDIAFALGVLALLGSRVPLALKI). The chain crosses the membrane as a helical span at residues 155-176 (FLMALAIIDDLGAIIIIALFYT). Residues 177–180 (NDLS) lie on the Periplasmic side of the membrane. A helical transmembrane segment spans residues 181–200 (MASLGVAAVAIAVLAVLNLC). The Cytoplasmic portion of the chain corresponds to 201 to 204 (GVRR). The chain crosses the membrane as a helical span at residues 205-222 (TGVYILVGVVLWTAVLKS). Residue Gly-223 is a topological domain, periplasmic. The chain crosses the membrane as a helical span at residues 224–236 (VHATLAGVIVGFF). Over 237-253 (IPLKEKHGRSPAKRLEH) the chain is Cytoplasmic. Residues 254 to 272 (VLHPWVAYLILPLFAFANA) form a helical membrane-spanning segment. The Periplasmic portion of the chain corresponds to 273–286 (GVSLQGVTLDGLTS). A helical membrane pass occupies residues 287 to 310 (ILPLGIIAGLLIGKPLGISLFCWL). Topologically, residues 311–339 (ALRLKLAHLPEGTTYQQIMAVGILCGIGF) are cytoplasmic. The chain crosses the membrane as a helical span at residues 340-350 (TMSIFIASLAF). Over 351-357 (GSVDPEL) the chain is Periplasmic. A helical membrane pass occupies residues 358–380 (INWAKLGILVGSISSAVIGYSWL). The Cytoplasmic segment spans residues 381–388 (RVRLRPSV).

This sequence belongs to the NhaA Na(+)/H(+) (TC 2.A.33) antiporter family.

The protein resides in the cell inner membrane. The catalysed reaction is Na(+)(in) + 2 H(+)(out) = Na(+)(out) + 2 H(+)(in). In terms of biological role, na(+)/H(+) antiporter that extrudes sodium in exchange for external protons. This chain is Na(+)/H(+) antiporter NhaA, found in Escherichia coli O9:H4 (strain HS).